A 519-amino-acid chain; its full sequence is Membrane-bound lytic murein transglycosylase F (519 aa).

An N-terminal signal peptide occupies residues Met-1 to Ala-32. The interval Asp-33–Gly-269 is non-LT domain. The interval Asn-270–Arg-519 is LT domain. Residue Glu-314 is part of the active site. The disordered stretch occupies residues Pro-495–Arg-519. The segment covering Ala-508 to Arg-519 has biased composition (polar residues).

It in the N-terminal section; belongs to the bacterial solute-binding protein 3 family. In the C-terminal section; belongs to the transglycosylase Slt family.

The protein localises to the cell outer membrane. It carries out the reaction Exolytic cleavage of the (1-&gt;4)-beta-glycosidic linkage between N-acetylmuramic acid (MurNAc) and N-acetylglucosamine (GlcNAc) residues in peptidoglycan, from either the reducing or the non-reducing ends of the peptidoglycan chains, with concomitant formation of a 1,6-anhydrobond in the MurNAc residue.. Murein-degrading enzyme that degrades murein glycan strands and insoluble, high-molecular weight murein sacculi, with the concomitant formation of a 1,6-anhydromuramoyl product. Lytic transglycosylases (LTs) play an integral role in the metabolism of the peptidoglycan (PG) sacculus. Their lytic action creates space within the PG sacculus to allow for its expansion as well as for the insertion of various structures such as secretion systems and flagella. The polypeptide is Membrane-bound lytic murein transglycosylase F (Cronobacter sakazakii (strain ATCC BAA-894) (Enterobacter sakazakii)).